The chain runs to 66 residues: Moricin-1 (66 aa).

Positions 1 to 24 (MNILKFFFVFIVAMSLVSCSTAAP) are cleaved as a signal peptide.

As to expression, expressed in fat body and to a lesser extent in hemocyte and Malpighian tubules.

It is found in the secreted. Its function is as follows. Has antibacterial activity against Gram-positive and Gram-negative bacteria. Probably acts by disturbing membrane functions with its amphipathic structure. The chain is Moricin-1 (MOR1) from Bombyx mori (Silk moth).